Consider the following 227-residue polypeptide: Phosphoglycolate phosphatase (227 aa).

D9 serves as the catalytic Nucleophile. Mg(2+) contacts are provided by D9, D11, and D171.

The protein belongs to the HAD-like hydrolase superfamily. CbbY/CbbZ/Gph/YieH family. Mg(2+) serves as cofactor.

The enzyme catalyses 2-phosphoglycolate + H2O = glycolate + phosphate. The protein operates within organic acid metabolism; glycolate biosynthesis; glycolate from 2-phosphoglycolate: step 1/1. Its function is as follows. Specifically catalyzes the dephosphorylation of 2-phosphoglycolate. Is involved in the dissimilation of the intracellular 2-phosphoglycolate formed during the DNA repair of 3'-phosphoglycolate ends, a major class of DNA lesions induced by oxidative stress. In Mesorhizobium japonicum (strain LMG 29417 / CECT 9101 / MAFF 303099) (Mesorhizobium loti (strain MAFF 303099)), this protein is Phosphoglycolate phosphatase.